The chain runs to 196 residues: Imidazole glycerol phosphate synthase subunit HisH (196 aa).

In terms of domain architecture, Glutamine amidotransferase type-1 spans 2 to 196 (NIVIIDTNCS…QQLVKNFLEI (195 aa)). Cysteine 77 (nucleophile) is an active-site residue. Catalysis depends on residues histidine 178 and glutamate 180.

In terms of assembly, heterodimer of HisH and HisF.

The protein resides in the cytoplasm. It carries out the reaction 5-[(5-phospho-1-deoxy-D-ribulos-1-ylimino)methylamino]-1-(5-phospho-beta-D-ribosyl)imidazole-4-carboxamide + L-glutamine = D-erythro-1-(imidazol-4-yl)glycerol 3-phosphate + 5-amino-1-(5-phospho-beta-D-ribosyl)imidazole-4-carboxamide + L-glutamate + H(+). It catalyses the reaction L-glutamine + H2O = L-glutamate + NH4(+). Its pathway is amino-acid biosynthesis; L-histidine biosynthesis; L-histidine from 5-phospho-alpha-D-ribose 1-diphosphate: step 5/9. Its function is as follows. IGPS catalyzes the conversion of PRFAR and glutamine to IGP, AICAR and glutamate. The HisH subunit catalyzes the hydrolysis of glutamine to glutamate and ammonia as part of the synthesis of IGP and AICAR. The resulting ammonia molecule is channeled to the active site of HisF. This is Imidazole glycerol phosphate synthase subunit HisH from Blochmanniella pennsylvanica (strain BPEN).